The following is a 257-amino-acid chain: Adenosylcobinamide-GDP ribazoletransferase (257 aa).

6 helical membrane passes run glutamine 7–valine 27, arginine 39–threonine 59, glycine 61–glycine 81, isoleucine 113–serine 133, valine 143–phenylalanine 163, and valine 196–leucine 216.

It belongs to the CobS family. Mg(2+) is required as a cofactor.

The protein resides in the cell inner membrane. It carries out the reaction alpha-ribazole + adenosylcob(III)inamide-GDP = adenosylcob(III)alamin + GMP + H(+). The enzyme catalyses alpha-ribazole 5'-phosphate + adenosylcob(III)inamide-GDP = adenosylcob(III)alamin 5'-phosphate + GMP + H(+). The protein operates within cofactor biosynthesis; adenosylcobalamin biosynthesis; adenosylcobalamin from cob(II)yrinate a,c-diamide: step 7/7. Joins adenosylcobinamide-GDP and alpha-ribazole to generate adenosylcobalamin (Ado-cobalamin). Also synthesizes adenosylcobalamin 5'-phosphate from adenosylcobinamide-GDP and alpha-ribazole 5'-phosphate. The sequence is that of Adenosylcobinamide-GDP ribazoletransferase from Shewanella woodyi (strain ATCC 51908 / MS32).